Here is a 440-residue protein sequence, read N- to C-terminus: Protein CapE (440 aa).

The next 12 membrane-spanning stretches (helical) occupy residues 7–27 (VILI…IGYL), 31–51 (IGFR…VYLL), 60–80 (LVYL…NIFL), 102–122 (FSIA…ISVF), 141–161 (FYYT…FYII), 179–199 (ELPM…FAFS), 204–224 (THIK…LITG), 249–269 (WWMI…IKVF), 324–344 (IFSY…GYGF), 360–380 (YYNG…LLLW), 382–402 (FTNF…SVLI), and 409–429 (FSFV…LLFI).

It localises to the cell membrane. It functions in the pathway capsule biogenesis; capsule polysaccharide biosynthesis. Its function is as follows. Required for the biosynthesis of type 1 capsular polysaccharide. This Staphylococcus aureus protein is Protein CapE (capE).